The chain runs to 611 residues: Dihydroxy-acid dehydratase (611 aa).

D81 is a binding site for Mg(2+). C122 serves as a coordination point for [2Fe-2S] cluster. The Mg(2+) site is built by D123 and K124. N6-carboxylysine is present on K124. C195 contributes to the [2Fe-2S] cluster binding site. Residue E491 participates in Mg(2+) binding. The active-site Proton acceptor is S517.

This sequence belongs to the IlvD/Edd family. Homodimer. The cofactor is [2Fe-2S] cluster. Mg(2+) serves as cofactor.

It carries out the reaction (2R)-2,3-dihydroxy-3-methylbutanoate = 3-methyl-2-oxobutanoate + H2O. It catalyses the reaction (2R,3R)-2,3-dihydroxy-3-methylpentanoate = (S)-3-methyl-2-oxopentanoate + H2O. It participates in amino-acid biosynthesis; L-isoleucine biosynthesis; L-isoleucine from 2-oxobutanoate: step 3/4. Its pathway is amino-acid biosynthesis; L-valine biosynthesis; L-valine from pyruvate: step 3/4. Functionally, functions in the biosynthesis of branched-chain amino acids. Catalyzes the dehydration of (2R,3R)-2,3-dihydroxy-3-methylpentanoate (2,3-dihydroxy-3-methylvalerate) into 2-oxo-3-methylpentanoate (2-oxo-3-methylvalerate) and of (2R)-2,3-dihydroxy-3-methylbutanoate (2,3-dihydroxyisovalerate) into 2-oxo-3-methylbutanoate (2-oxoisovalerate), the penultimate precursor to L-isoleucine and L-valine, respectively. This Allorhizobium ampelinum (strain ATCC BAA-846 / DSM 112012 / S4) (Agrobacterium vitis (strain S4)) protein is Dihydroxy-acid dehydratase.